Consider the following 378-residue polypeptide: Cell surface mannoprotein MP65 (378 aa).

The N-terminal stretch at 1-32 is a signal peptide; that stretch reads MLFKSFVTFTVLANALAAPLAHQHHQHKEEKR. The segment at 67-124 is disordered; it reads VSVSVNTEPPQNHPTTTQDVASASTYPSSTDGSAASSSAAASSSSQAGSEPSGGVGSG. The segment covering 72–93 has biased composition (polar residues); the sequence is NTEPPQNHPTTTQDVASASTYP. Low complexity predominate over residues 94-116; that stretch reads SSTDGSAASSSAAASSSSQAGSE. Residue E316 is the Nucleophile of the active site.

This sequence belongs to the glycosyl hydrolase 17 family. In terms of assembly, component of a multiprotein complex of 250 kDa composed of at least HYR1, MP65, and PRA1. In terms of processing, glycosylated protein with a polysaccharide moiety composed exclusively of mannose and glucose at a ratio of 12.7 to 1. Contributes highly to the carbohydrate component of the matrix. Treatment with tunicamycin impairs glycosylation.

The protein localises to the secreted. It localises to the cell wall. Its function is as follows. Surface mannoprotein required for hyphal morphogenesis, surface adherence, and pathogenicity. Contributes in a high proportion to the carbohydrate component of the matrix due to high levels of glycosylation and may play important roles during biofilm development and maintenance. Acts as a major antigen target of host cell-mediated immune response. Induces extensive T-cell proliferation of human peripheral blood mononuclear cells. Facilitates host dendritic cells maturation and promotes cytokine production through its glycosylated portion while its protein core is essentially involved in induction of T-cell response. This chain is Cell surface mannoprotein MP65 (MP65), found in Candida albicans (strain SC5314 / ATCC MYA-2876) (Yeast).